The chain runs to 1045 residues: Probable beta-glucosidase E (1045 aa).

The disordered stretch occupies residues 1 to 74 (MAPPDSTHGG…SGSYQLRPVD (74 aa)). At 1-163 (MAPPDSTHGG…PVKYARIWWR (163 aa)) the chain is on the cytoplasmic side. A compositionally biased stretch (basic and acidic residues) spans 11–20 (SFRDHLKTND). The helical; Signal-anchor for type II membrane protein transmembrane segment at 164–184 (TLLAVIVTLAVVVWGFLSFAV) threads the bilayer. Topologically, residues 185–1045 (SHREEPKVWP…SRDLPLMGEY (861 aa)) are extracellular. N-linked (GlcNAc...) asparagine glycosylation is found at N226, N234, and N402. The active site involves D430. 6 N-linked (GlcNAc...) asparagine glycosylation sites follow: N473, N512, N577, N893, N902, and N988.

Belongs to the glycosyl hydrolase 3 family.

It localises to the cell membrane. The catalysed reaction is Hydrolysis of terminal, non-reducing beta-D-glucosyl residues with release of beta-D-glucose.. It functions in the pathway glycan metabolism; cellulose degradation. Its function is as follows. Beta-glucosidases are one of a number of cellulolytic enzymes involved in the degradation of cellulosic biomass. Catalyzes the last step releasing glucose from the inhibitory cellobiose. The sequence is that of Probable beta-glucosidase E (bglE) from Neosartorya fischeri (strain ATCC 1020 / DSM 3700 / CBS 544.65 / FGSC A1164 / JCM 1740 / NRRL 181 / WB 181) (Aspergillus fischerianus).